A 421-amino-acid polypeptide reads, in one-letter code: Histidine--tRNA ligase (421 aa).

The protein belongs to the class-II aminoacyl-tRNA synthetase family.

It localises to the cytoplasm. It carries out the reaction tRNA(His) + L-histidine + ATP = L-histidyl-tRNA(His) + AMP + diphosphate + H(+). The chain is Histidine--tRNA ligase from Pyrobaculum calidifontis (strain DSM 21063 / JCM 11548 / VA1).